We begin with the raw amino-acid sequence, 140 residues long: MAKKVKAIVKLQIPAGKANPAPPIGPALGQHGINIMGFCKEYNERTASMVGTIVPAEITIYDDRSFTFITKTPPAADLLKKAAGVTSGSGTPSKSVVAVISKGQLREIASVKMKDLNAVDIEGAERIIEGTARSMGIKVE.

This sequence belongs to the universal ribosomal protein uL11 family. In terms of assembly, part of the ribosomal stalk of the 50S ribosomal subunit. Interacts with L10 and the large rRNA to form the base of the stalk. L10 forms an elongated spine to which L12 dimers bind in a sequential fashion forming a multimeric L10(L12)X complex. One or more lysine residues are methylated.

Forms part of the ribosomal stalk which helps the ribosome interact with GTP-bound translation factors. This Dehalococcoides mccartyi (strain ATCC BAA-2100 / JCM 16839 / KCTC 5957 / BAV1) protein is Large ribosomal subunit protein uL11.